A 276-amino-acid chain; its full sequence is 1H-3-hydroxy-4-oxoquinaldine 2,4-dioxygenase (276 aa).

The 123-residue stretch at 28–150 folds into the AB hydrolase-1 domain; that stretch reads PAILLLPGWC…TLLKDPERWR (123 aa). Substrate is bound by residues 36 to 38, 100 to 101, and Trp-160; these read WCH and HS. His-251 acts as the Proton donor/acceptor in catalysis.

The protein belongs to the AB hydrolase superfamily. None. Contrary to most other dioxygenases, this enzyme does not require a cofactor for catalysis. serves as cofactor.

It catalyses the reaction 3-hydroxy-2-methyl-1H-quinolin-4-one + O2 = N-acetylanthranilate + CO + H(+). Ring-cleaving dioxygenase involved in quinaldine degradation and utilization. The chain is 1H-3-hydroxy-4-oxoquinaldine 2,4-dioxygenase (hod) from Paenarthrobacter nitroguajacolicus (Arthrobacter nitroguajacolicus).